The following is a 203-amino-acid chain: Recombination protein RecR (203 aa).

A C4-type zinc finger spans residues 56-71 (CAVCGNVSDNERCRIC). In terms of domain architecture, Toprim spans 79–179 (SVVCIVEEPK…TVTRIASGLP (101 aa)).

Belongs to the RecR family.

In terms of biological role, may play a role in DNA repair. It seems to be involved in an RecBC-independent recombinational process of DNA repair. It may act with RecF and RecO. This is Recombination protein RecR from Mycobacterium bovis (strain ATCC BAA-935 / AF2122/97).